Reading from the N-terminus, the 136-residue chain is Small ribosomal subunit protein eS6 (136 aa).

It belongs to the eukaryotic ribosomal protein eS6 family.

This Methanosarcina mazei (strain ATCC BAA-159 / DSM 3647 / Goe1 / Go1 / JCM 11833 / OCM 88) (Methanosarcina frisia) protein is Small ribosomal subunit protein eS6.